Here is a 161-residue protein sequence, read N- to C-terminus: Cyclic pyranopterin monophosphate synthase (161 aa).

Substrate contacts are provided by residues 75–77 (MCH) and 115–116 (ME). Residue Asp130 is part of the active site.

It belongs to the MoaC family. In terms of assembly, homohexamer; trimer of dimers.

The enzyme catalyses (8S)-3',8-cyclo-7,8-dihydroguanosine 5'-triphosphate = cyclic pyranopterin phosphate + diphosphate. The protein operates within cofactor biosynthesis; molybdopterin biosynthesis. Its function is as follows. Catalyzes the conversion of (8S)-3',8-cyclo-7,8-dihydroguanosine 5'-triphosphate to cyclic pyranopterin monophosphate (cPMP). The polypeptide is Cyclic pyranopterin monophosphate synthase (Bacillus cereus (strain 03BB102)).